The primary structure comprises 873 residues: Alanine--tRNA ligase (873 aa).

Histidine 562, histidine 566, cysteine 663, and histidine 667 together coordinate Zn(2+).

The protein belongs to the class-II aminoacyl-tRNA synthetase family. It depends on Zn(2+) as a cofactor.

The protein localises to the cytoplasm. It catalyses the reaction tRNA(Ala) + L-alanine + ATP = L-alanyl-tRNA(Ala) + AMP + diphosphate. Catalyzes the attachment of alanine to tRNA(Ala) in a two-step reaction: alanine is first activated by ATP to form Ala-AMP and then transferred to the acceptor end of tRNA(Ala). Also edits incorrectly charged Ser-tRNA(Ala) and Gly-tRNA(Ala) via its editing domain. The protein is Alanine--tRNA ligase of Bordetella avium (strain 197N).